The following is a 351-amino-acid chain: MKFLDQAKVYVRSGNGGGGCVSFRREAYVEYGGPDGGDGGKGGDVWVEAVEGLNTLIDYRYKQHFKADTGMHGMGRNRTGSGGEDVVLQVPAGTQLLDEDKEEILADLTEIGQRVLLARGGDGGKGNSHFKTSTNQAPRKTIPGWPGEERWIWLRLKLIADVGLVGLPNAGKSTFLSVVSKANPKIAAYPFTTLYPNLGVVDLGPGSRFIVADIPGLIEGAHEGAGIGDRFLGHIERCASLIHLIDGTQDDVVAAYKTVRGELEAYGDGLPEKQEILALNKIDAMDEAMVAEKRAELEAASGKTVMTLSGVSGDGVKALCGSAWDIVLQNRRAEKAAAEAAEKGEEGWAPS.

Residues 1-159 (MKFLDQAKVY…RWIWLRLKLI (159 aa)) enclose the Obg domain. The OBG-type G domain occupies 160–328 (ADVGLVGLPN…LCGSAWDIVL (169 aa)). Residues 166-173 (GLPNAGKS), 191-195 (FTTLY), 213-216 (DIPG), 280-283 (NKID), and 309-311 (SGV) contribute to the GTP site. 2 residues coordinate Mg(2+): Ser-173 and Thr-193.

This sequence belongs to the TRAFAC class OBG-HflX-like GTPase superfamily. OBG GTPase family. As to quaternary structure, monomer. Requires Mg(2+) as cofactor.

It localises to the cytoplasm. Its function is as follows. An essential GTPase which binds GTP, GDP and possibly (p)ppGpp with moderate affinity, with high nucleotide exchange rates and a fairly low GTP hydrolysis rate. Plays a role in control of the cell cycle, stress response, ribosome biogenesis and in those bacteria that undergo differentiation, in morphogenesis control. The chain is GTPase Obg from Maricaulis maris (strain MCS10) (Caulobacter maris).